The chain runs to 453 residues: tRNA modification GTPase MnmE (453 aa).

Arginine 22, glutamate 79, and lysine 119 together coordinate (6S)-5-formyl-5,6,7,8-tetrahydrofolate. Positions 215–376 (GMKVVIAGRP…LKQHLKSLMG (162 aa)) constitute a TrmE-type G domain. A K(+)-binding site is contributed by asparagine 225. GTP is bound by residues 225–230 (NAGKSS), 244–250 (TDIAGTT), 269–272 (DTAG), and 334–337 (NKAD). Serine 229 contributes to the Mg(2+) binding site. 3 residues coordinate K(+): threonine 244, isoleucine 246, and threonine 249. A Mg(2+)-binding site is contributed by threonine 250. Residue lysine 453 coordinates (6S)-5-formyl-5,6,7,8-tetrahydrofolate.

It belongs to the TRAFAC class TrmE-Era-EngA-EngB-Septin-like GTPase superfamily. TrmE GTPase family. Homodimer. Heterotetramer of two MnmE and two MnmG subunits. Requires K(+) as cofactor.

Its subcellular location is the cytoplasm. Functionally, exhibits a very high intrinsic GTPase hydrolysis rate. Involved in the addition of a carboxymethylaminomethyl (cmnm) group at the wobble position (U34) of certain tRNAs, forming tRNA-cmnm(5)s(2)U34. This chain is tRNA modification GTPase MnmE, found in Shewanella amazonensis (strain ATCC BAA-1098 / SB2B).